We begin with the raw amino-acid sequence, 388 residues long: Lipid-A-disaccharide synthase (388 aa).

The protein belongs to the LpxB family.

It carries out the reaction a lipid X + a UDP-2-N,3-O-bis[(3R)-3-hydroxyacyl]-alpha-D-glucosamine = a lipid A disaccharide + UDP + H(+). Its pathway is bacterial outer membrane biogenesis; LPS lipid A biosynthesis. Functionally, condensation of UDP-2,3-diacylglucosamine and 2,3-diacylglucosamine-1-phosphate to form lipid A disaccharide, a precursor of lipid A, a phosphorylated glycolipid that anchors the lipopolysaccharide to the outer membrane of the cell. The sequence is that of Lipid-A-disaccharide synthase from Sulfurihydrogenibium sp. (strain YO3AOP1).